Consider the following 324-residue polypeptide: Serine/threonine-protein phosphatase PP1 isozyme 8 (324 aa).

D66, H68, D94, and N126 together coordinate Mn(2+). The active-site Proton donor is the H127. Residues H175 and H250 each contribute to the Mn(2+) site.

This sequence belongs to the PPP phosphatase family. PP-1 subfamily. Requires Mn(2+) as cofactor. As to expression, expressed in roots, rosettes and flowers.

It localises to the nucleus. The protein resides in the cytoplasm. The catalysed reaction is O-phospho-L-seryl-[protein] + H2O = L-seryl-[protein] + phosphate. It catalyses the reaction O-phospho-L-threonyl-[protein] + H2O = L-threonyl-[protein] + phosphate. Its activity is regulated as follows. Phosphatase activity is strongly reduced by the protein phosphatase inhibitor 2 (I-2). Functionally, serine/threonine-protein phosphatase that possesses phosphatase activity toward para-nitrophenyl phosphate (pNPP) in vitro. In Arabidopsis thaliana (Mouse-ear cress), this protein is Serine/threonine-protein phosphatase PP1 isozyme 8.